Reading from the N-terminus, the 133-residue chain is UPF0225 protein BP2036 (133 aa).

It belongs to the UPF0225 family.

The sequence is that of UPF0225 protein BP2036 from Bordetella pertussis (strain Tohama I / ATCC BAA-589 / NCTC 13251).